A 135-amino-acid polypeptide reads, in one-letter code: Putative pre-16S rRNA nuclease (135 aa).

It belongs to the YqgF nuclease family.

The protein localises to the cytoplasm. Functionally, could be a nuclease involved in processing of the 5'-end of pre-16S rRNA. In Christiangramia forsetii (strain DSM 17595 / CGMCC 1.15422 / KT0803) (Gramella forsetii), this protein is Putative pre-16S rRNA nuclease.